The following is a 352-amino-acid chain: Protein NDRG4 (352 aa).

Residues Lys-293, Ser-298, Ser-317, and Ser-323 each carry the phosphoserine modification. The interval 301–352 (AVPSASMTRLARSRTASLTSASSVDGSRPQPCAHSDSSEGMGQVNHTMEVSC) is disordered. The span at 308–323 (TRLARSRTASLTSASS) shows a compositional bias: low complexity. The span at 338–352 (SEGMGQVNHTMEVSC) shows a compositional bias: polar residues.

The protein belongs to the NDRG family. In terms of tissue distribution, predominantly expressed in the brain (at protein level). Detected in neurons of various parts of brain, including the olfactory bulb, olfactory tuberculum, cerebral cortex, striatum, hippocampus, dentate gyrus, thalamus, hypothalamus, mesencephalon, cerebellum, pons and medulla oblongata.

The protein localises to the cytoplasm. It is found in the cytosol. Its function is as follows. Contributes to the maintenance of intracerebral BDNF levels within the normal range, which is necessary for the preservation of spatial learning and the resistance to neuronal cell death caused by ischemic stress. May enhance growth factor-induced ERK1 and ERK2 phosphorylation. May attenuate NGF-promoted ELK1 phosphorylation in a microtubule-dependent manner. This is Protein NDRG4 (Ndrg4) from Mus musculus (Mouse).